The chain runs to 158 residues: 6,7-dimethyl-8-ribityllumazine synthase (158 aa).

Residues Phe-23, 61–63 (SFE), and 85–87 (AVI) each bind 5-amino-6-(D-ribitylamino)uracil. (2S)-2-hydroxy-3-oxobutyl phosphate is bound at residue 90–91 (ET). The active-site Proton donor is the His-93. Phe-118 contributes to the 5-amino-6-(D-ribitylamino)uracil binding site. Position 132 (Arg-132) interacts with (2S)-2-hydroxy-3-oxobutyl phosphate.

It belongs to the DMRL synthase family.

It catalyses the reaction (2S)-2-hydroxy-3-oxobutyl phosphate + 5-amino-6-(D-ribitylamino)uracil = 6,7-dimethyl-8-(1-D-ribityl)lumazine + phosphate + 2 H2O + H(+). It participates in cofactor biosynthesis; riboflavin biosynthesis; riboflavin from 2-hydroxy-3-oxobutyl phosphate and 5-amino-6-(D-ribitylamino)uracil: step 1/2. Its function is as follows. Catalyzes the formation of 6,7-dimethyl-8-ribityllumazine by condensation of 5-amino-6-(D-ribitylamino)uracil with 3,4-dihydroxy-2-butanone 4-phosphate. This is the penultimate step in the biosynthesis of riboflavin. The chain is 6,7-dimethyl-8-ribityllumazine synthase from Prochlorococcus marinus (strain AS9601).